The chain runs to 347 residues: Anthranilate phosphoribosyltransferase (347 aa).

Residues glycine 88, 91–92, threonine 96, 98–101, 116–124, and serine 128 contribute to the 5-phospho-alpha-D-ribose 1-diphosphate site; these read GD, NIST, and KHGNRSVSS. Glycine 88 contributes to the anthranilate binding site. Serine 100 contributes to the Mg(2+) binding site. Asparagine 119 lines the anthranilate pocket. Arginine 174 lines the anthranilate pocket. Mg(2+) is bound by residues aspartate 232 and glutamate 233.

Belongs to the anthranilate phosphoribosyltransferase family. Homodimer. Mg(2+) serves as cofactor.

It carries out the reaction N-(5-phospho-beta-D-ribosyl)anthranilate + diphosphate = 5-phospho-alpha-D-ribose 1-diphosphate + anthranilate. It participates in amino-acid biosynthesis; L-tryptophan biosynthesis; L-tryptophan from chorismate: step 2/5. In terms of biological role, catalyzes the transfer of the phosphoribosyl group of 5-phosphorylribose-1-pyrophosphate (PRPP) to anthranilate to yield N-(5'-phosphoribosyl)-anthranilate (PRA). This is Anthranilate phosphoribosyltransferase from Shewanella sp. (strain MR-4).